Reading from the N-terminus, the 393-residue chain is Pyruvate dehydrogenase E1 component subunit alpha-2, mitochondrial (393 aa).

The transit peptide at 1-28 directs the protein to the mitochondrion; the sequence is MALSRLSSRSNTFLKPAITALPSSIRRH. Pyruvate is bound by residues H94, Y120, R121, G169, V171, D200, G201, A202, N229, and Y231. Residues Y120, R121, G169, V171, D200, G201, A202, and N229 each contribute to the thiamine diphosphate site. D200 is a Mg(2+) binding site. The Mg(2+) site is built by N229 and Y231. A thiamine diphosphate-binding site is contributed by H295.

Tetramer of 2 alpha and 2 beta subunits. Requires thiamine diphosphate as cofactor. Mg(2+) serves as cofactor.

Its subcellular location is the mitochondrion matrix. It carries out the reaction N(6)-[(R)-lipoyl]-L-lysyl-[protein] + pyruvate + H(+) = N(6)-[(R)-S(8)-acetyldihydrolipoyl]-L-lysyl-[protein] + CO2. E1 activity is regulated by phosphorylation (inactivation) and dephosphorylation (activation) of the alpha subunit. In terms of biological role, the pyruvate dehydrogenase complex catalyzes the overall conversion of pyruvate to acetyl-CoA and CO(2). It contains multiple copies of three enzymatic components: pyruvate dehydrogenase (E1), dihydrolipoamide acetyltransferase (E2) and lipoamide dehydrogenase (E3). The chain is Pyruvate dehydrogenase E1 component subunit alpha-2, mitochondrial (IAR4) from Arabidopsis thaliana (Mouse-ear cress).